Consider the following 882-residue polypeptide: DNA mismatch repair protein MutS (882 aa).

The disordered stretch occupies residues Met1–Tyr22. ATP is bound at residue Gly662–Ser669.

The protein belongs to the DNA mismatch repair MutS family.

Its function is as follows. This protein is involved in the repair of mismatches in DNA. It is possible that it carries out the mismatch recognition step. This protein has a weak ATPase activity. This Microcystis aeruginosa (strain NIES-843 / IAM M-2473) protein is DNA mismatch repair protein MutS.